The following is a 539-amino-acid chain: Fucosyltransferase 2 (539 aa).

Residues 1-5 (MRITE) are Cytoplasmic-facing. A helical; Signal-anchor for type II membrane protein membrane pass occupies residues 6–26 (ILALFMVLVPVSLVIVAMFGY). Residues 27 to 539 (DQGNGFVQAS…SWGLKLVDNF (513 aa)) lie on the Lumenal side of the membrane. N-linked (GlcNAc...) asparagine glycans are attached at residues N44, N231, and N482.

The protein belongs to the glycosyltransferase 37 family. Expressed in roots, stems, leaves, flowers, siliques and seedlings.

It is found in the golgi apparatus. The protein localises to the golgi stack membrane. The protein operates within protein modification; protein glycosylation. May be involved in cell wall biosynthesis. May act as a fucosyltransferase. The sequence is that of Fucosyltransferase 2 (FUT2) from Arabidopsis thaliana (Mouse-ear cress).